The chain runs to 126 residues: Fluoride-specific ion channel FluC (126 aa).

4 helical membrane passes run 4 to 24, 35 to 55, 68 to 88, and 103 to 123; these read SILAVGIGGALGSLFRWFLGI, LGTFAANVIAGYVIGVAVAGF, FVITGLMGGLSTFSTFSAEVV, and IVIHVGASLVMTILGIATVSL. 2 residues coordinate Na(+): Gly-75 and Ser-78.

The protein belongs to the fluoride channel Fluc/FEX (TC 1.A.43) family.

Its subcellular location is the cell inner membrane. It carries out the reaction fluoride(in) = fluoride(out). Its activity is regulated as follows. Na(+) is not transported, but it plays an essential structural role and its presence is essential for fluoride channel function. Functionally, fluoride-specific ion channel. Important for reducing fluoride concentration in the cell, thus reducing its toxicity. This chain is Fluoride-specific ion channel FluC, found in Paraburkholderia xenovorans (strain LB400).